A 225-amino-acid chain; its full sequence is Thymidine kinase (225 aa).

Position 8-15 (8-15) interacts with ATP; the sequence is GPMFSGKT. Residue Glu92 is the Proton acceptor of the active site. Tyr122 is a substrate binding site. The Zn(2+) site is built by Cys147 and Cys150. Position 167 to 171 (167 to 171) interacts with substrate; it reads KILVG. Zn(2+)-binding residues include Cys180 and Cys183. The segment covering 197 to 207 has biased composition (polar residues); sequence SEQINNQTELS. The segment at 197–225 is disordered; sequence SEQINNQTELSEPTRQKESLKIKKRRIDS. The segment covering 208-225 has biased composition (basic and acidic residues); that stretch reads EPTRQKESLKIKKRRIDS.

This sequence belongs to the thymidine kinase family.

The catalysed reaction is thymidine + ATP = dTMP + ADP + H(+). The sequence is that of Thymidine kinase (TK) from Acanthamoeba polyphaga mimivirus (APMV).